The sequence spans 1069 residues: Leucine--tRNA ligase (1069 aa).

The tract at residues 19-53 (TAEHGTGAANATASPSGAVPPSGATATAGTGDEPG) is disordered. A 'HIGH' region motif is present at residues 107-118 (PYPSGTGLHVGH). Basic and acidic residues predominate over residues 823 to 836 (GRFTHHGAPVDRRS). Residues 823 to 846 (GRFTHHGAPVDRRSGKMGKSLKNS) are disordered. Positions 838–842 (KMGKS) match the 'KMSKS' region motif. Lys841 provides a ligand contact to ATP.

Belongs to the class-I aminoacyl-tRNA synthetase family.

The protein localises to the cytoplasm. The enzyme catalyses tRNA(Leu) + L-leucine + ATP = L-leucyl-tRNA(Leu) + AMP + diphosphate. The protein is Leucine--tRNA ligase of Frankia alni (strain DSM 45986 / CECT 9034 / ACN14a).